A 182-amino-acid polypeptide reads, in one-letter code: Small ribosomal subunit protein uS4c (182 aa).

An S4 RNA-binding domain is found at 82 to 143 (MRLDNILFRL…KQRSKALIQN (62 aa)).

This sequence belongs to the universal ribosomal protein uS4 family. In terms of assembly, part of the 30S ribosomal subunit. Contacts protein S5. The interaction surface between S4 and S5 is involved in control of translational fidelity.

It is found in the plastid. The protein resides in the chloroplast. Its function is as follows. One of the primary rRNA binding proteins, it binds directly to 16S rRNA where it nucleates assembly of the body of the 30S subunit. In terms of biological role, with S5 and S12 plays an important role in translational accuracy. The protein is Small ribosomal subunit protein uS4c (rps4) of Libertia formosa (Snowy mermaid).